The sequence spans 116 residues: Toxin ICK-10 (116 aa).

The first 19 residues, 1-19 (MMKLYSLVIIATLAAAAFA), serve as a signal peptide directing secretion. 4 disulfide bridges follow: C56-C71, C64-C77, C68-C113, and C70-C84.

The protein belongs to the neurotoxin 25 family. ICK-8 subfamily. In terms of tissue distribution, expressed by the venom gland.

Its subcellular location is the secreted. Functionally, ion channel inhibitor. In Trittame loki (Brush-footed trapdoor spider), this protein is Toxin ICK-10.